Consider the following 61-residue polypeptide: Small ribosomal subunit protein uS14 (61 aa).

4 residues coordinate Zn(2+): C24, C27, C40, and C43.

It belongs to the universal ribosomal protein uS14 family. Zinc-binding uS14 subfamily. As to quaternary structure, part of the 30S ribosomal subunit. Contacts proteins S3 and S10. Requires Zn(2+) as cofactor.

Its function is as follows. Binds 16S rRNA, required for the assembly of 30S particles and may also be responsible for determining the conformation of the 16S rRNA at the A site. The chain is Small ribosomal subunit protein uS14 from Mycoplasma pneumoniae (strain ATCC 29342 / M129 / Subtype 1) (Mycoplasmoides pneumoniae).